A 949-amino-acid chain; its full sequence is Glycine dehydrogenase (decarboxylating) (949 aa).

Residue Lys-702 is modified to N6-(pyridoxal phosphate)lysine.

This sequence belongs to the GcvP family. As to quaternary structure, the glycine cleavage system is composed of four proteins: P, T, L and H. It depends on pyridoxal 5'-phosphate as a cofactor.

The catalysed reaction is N(6)-[(R)-lipoyl]-L-lysyl-[glycine-cleavage complex H protein] + glycine + H(+) = N(6)-[(R)-S(8)-aminomethyldihydrolipoyl]-L-lysyl-[glycine-cleavage complex H protein] + CO2. Its function is as follows. The glycine cleavage system catalyzes the degradation of glycine. The P protein binds the alpha-amino group of glycine through its pyridoxal phosphate cofactor; CO(2) is released and the remaining methylamine moiety is then transferred to the lipoamide cofactor of the H protein. In Rhodococcoides fascians (Rhodococcus fascians), this protein is Glycine dehydrogenase (decarboxylating).